The primary structure comprises 398 residues: Mitogen-activated protein kinase 1 (398 aa).

The interval 1 to 26 is disordered; it reads MDAGAQPPDTEMAEAGGGQQPPAAAA. One can recognise a Protein kinase domain in the interval 67-352; sequence KPPILPIGKG…VEGALAHPYL (286 aa). ATP contacts are provided by residues 73–81 and Lys-96; that span reads IGKGAYGIV. The active-site Proton acceptor is the Asp-193. Thr-225 bears the Phosphothreonine mark. The TXY motif lies at 225-227; sequence TEY. At Tyr-227 the chain carries Phosphotyrosine.

This sequence belongs to the protein kinase superfamily. CMGC Ser/Thr protein kinase family. MAP kinase subfamily. May interact with RAC1. Post-translationally, dually phosphorylated on Thr-225 and Tyr-227, which activates the enzyme.

It catalyses the reaction L-seryl-[protein] + ATP = O-phospho-L-seryl-[protein] + ADP + H(+). The catalysed reaction is L-threonyl-[protein] + ATP = O-phospho-L-threonyl-[protein] + ADP + H(+). With respect to regulation, activated by threonine and tyrosine phosphorylation. Activated in response to sphingolipid elicitor (SE). In terms of biological role, involved in sphingolipid elicitor (SE)-dependent defense signaling pathway. Acts downstream of heterotrimeric G protein alpha subunit and small GTPase RAC1. May regulate the expression of various genes involved in biotic and abiotic stress response. Involved in an abscisic acid signaling pathway that regulates the activities of antioxidant enzymes and the production of hydrogen peroxide. Acts downstream of CCAMK. The chain is Mitogen-activated protein kinase 1 (MPK1) from Oryza sativa subsp. japonica (Rice).